Here is an 84-residue protein sequence, read N- to C-terminus: Delta-conotoxin-like MVIA (84 aa).

The signal sequence occupies residues 1–22; it reads MKLTCVMIVAVLFLTTWTFVTA. Positions 23-49 are excised as a propeptide; sequence DDSRYGLKNLFPKARHEMKNPEASKLN. Cystine bridges form between Cys-54/Cys-69, Cys-61/Cys-73, and Cys-68/Cys-77. The residue at position 65 (Pro-65) is a 4-hydroxyproline. Ser-83 carries the serine amide modification.

Belongs to the conotoxin O1 superfamily. In terms of tissue distribution, expressed by the venom duct.

Its subcellular location is the secreted. Its function is as follows. Delta-conotoxins bind to site 6 of voltage-gated sodium channels (Nav) and inhibit the inactivation process. The sequence is that of Delta-conotoxin-like MVIA from Conus magus (Magical cone).